We begin with the raw amino-acid sequence, 102 residues long: Large ribosomal subunit protein bL21 (102 aa).

It belongs to the bacterial ribosomal protein bL21 family. As to quaternary structure, part of the 50S ribosomal subunit. Contacts protein L20.

This protein binds to 23S rRNA in the presence of protein L20. This Citrifermentans bemidjiense (strain ATCC BAA-1014 / DSM 16622 / JCM 12645 / Bem) (Geobacter bemidjiensis) protein is Large ribosomal subunit protein bL21.